The sequence spans 138 residues: Translation initiation factor 2 subunit beta (138 aa).

This sequence belongs to the eIF-2-beta/eIF-5 family. As to quaternary structure, heterotrimer composed of an alpha, a beta and a gamma chain.

In terms of biological role, eIF-2 functions in the early steps of protein synthesis by forming a ternary complex with GTP and initiator tRNA. This Methanococcus maripaludis (strain C5 / ATCC BAA-1333) protein is Translation initiation factor 2 subunit beta.